Reading from the N-terminus, the 706-residue chain is Paxillin-like protein 1 (706 aa).

Disordered stretches follow at residues 24–192 (ERAG…EQDL), 222–258 (VLDQ…LNFE), 279–341 (AKQE…TKVE), and 514–537 (IDNS…SSDA). Over residues 35 to 64 (PFSSQRNASTGSLQASVKSPPITRQRNVSA) the composition is skewed to polar residues. Phosphoserine is present on residues Ser-43 and Ser-63. 2 stretches are compositionally biased toward low complexity: residues 73–86 (KSAY…AYSS) and 117–129 (SSRP…SISR). 2 stretches are compositionally biased toward basic and acidic residues: residues 130 to 150 (PSER…DRQA) and 222 to 236 (VLDQ…KEES). Residues 237–252 (SIEYESEGQQEDENDI) are compositionally biased toward acidic residues. Residues 279 to 290 (AKQEEKNTEPKI) show a composition bias toward basic and acidic residues. Residues 296–308 (TRESNTPSLTMNA) are compositionally biased toward polar residues. 2 LIM zinc-binding domains span residues 556–612 (CRAC…CQKH) and 621–672 (CKVC…CGNH).

In Saccharomyces cerevisiae (strain ATCC 204508 / S288c) (Baker's yeast), this protein is Paxillin-like protein 1 (PXL1).